Here is a 423-residue protein sequence, read N- to C-terminus: Proline racemase A (423 aa).

The N-terminal stretch at 1 to 31 (MRKSVCPKQKFFFSAFPFFFFFCVFPLISRT) is a signal peptide. Residue Cys160 is the Proton acceptor of the active site. 161-162 (GH) provides a ligand contact to substrate. Asn213, Asn266, and Asn282 each carry an N-linked (GlcNAc...) asparagine glycan. Asp326 provides a ligand contact to substrate. Cys330 (proton donor) is an active-site residue. A substrate-binding site is contributed by 331 to 332 (GT).

Belongs to the proline racemase family. As to quaternary structure, homodimer.

The protein localises to the secreted. Its subcellular location is the membrane. It localises to the cytoplasm. It catalyses the reaction L-proline = D-proline. Inhibited by maleic acid, iodoacetamide, iodoacetate and, most particularly, pyrrole-2-carboxylic acid. Catalyzes the interconversion of L- and D-proline. Secreted isoform 1 contributes to parasite immune evasion by acting as a B-cell mitogen. Probably involved in parasite differentiation and infectivity. The polypeptide is Proline racemase A (PA45-A) (Trypanosoma cruzi (strain CL Brener)).